The following is an 854-amino-acid chain: Nucleolar MIF4G domain-containing protein 1 (854 aa).

The interval P2 to Q275 is necessary for nucleolar localization and for targeting PPP1CA to the nucleolus. Phosphoserine is present on S60. 2 disordered regions span residues E66 to F215 and S231 to Y333. The span at P76–Q99 shows a compositional bias: basic residues. A compositionally biased stretch (gly residues) spans S104–V113. A compositionally biased stretch (low complexity) spans V128–T173. Basic and acidic residues predominate over residues R188–L197. Positions S265–D280 are enriched in acidic residues. 3 stretches are compositionally biased toward basic and acidic residues: residues V281–S291, R303–S315, and Q322–E331. The short motif at K301–F304 is the Required for efficient binding to PPP1CA and for targeting PPP1CA to the nucleolus element. Phosphoserine occurs at positions 311, 314, and 315. The 198-residue stretch at K356–D553 folds into the MIF4G domain. The MI domain occupies D648 to F764.

This sequence belongs to the CWC22 family. May interact with EIF4A1, EIF4A2 and EIF4A3. Interacts with PPP1CA and PPP1CC.

The protein resides in the nucleus. Its subcellular location is the nucleolus. Plays a role in targeting PPP1CA to the nucleolus. The protein is Nucleolar MIF4G domain-containing protein 1 (Nom1) of Mus musculus (Mouse).